A 155-amino-acid polypeptide reads, in one-letter code: DNA gyrase inhibitor (155 aa).

Belongs to the DNA gyrase inhibitor family. As to quaternary structure, interacts with DNA gyrase.

The protein localises to the cytoplasm. Functionally, inhibits the supercoiling activity of DNA gyrase. Acts by inhibiting DNA gyrase at an early step, prior to (or at the step of) binding of DNA by the gyrase. It protects cells against toxins that target DNA gyrase, by inhibiting activity of these toxins and reducing the formation of lethal double-strand breaks in the cell. The protein is DNA gyrase inhibitor of Salmonella arizonae (strain ATCC BAA-731 / CDC346-86 / RSK2980).